The sequence spans 74 residues: Translation initiation factor IF-1 (74 aa).

The S1-like domain occupies 1–73; it reads MAKKDDIIEF…TKGRITYRGK (73 aa).

Belongs to the IF-1 family. In terms of assembly, component of the 30S ribosomal translation pre-initiation complex which assembles on the 30S ribosome in the order IF-2 and IF-3, IF-1 and N-formylmethionyl-tRNA(fMet); mRNA recruitment can occur at any time during PIC assembly.

The protein resides in the cytoplasm. In terms of biological role, one of the essential components for the initiation of protein synthesis. Stabilizes the binding of IF-2 and IF-3 on the 30S subunit to which N-formylmethionyl-tRNA(fMet) subsequently binds. Helps modulate mRNA selection, yielding the 30S pre-initiation complex (PIC). Upon addition of the 50S ribosomal subunit IF-1, IF-2 and IF-3 are released leaving the mature 70S translation initiation complex. This is Translation initiation factor IF-1 from Psychrobacter sp. (strain PRwf-1).